The following is a 478-amino-acid chain: Bifunctional protein HldE (478 aa).

Positions M1–S318 are ribokinase. Position 195 to 198 (N195 to E198) interacts with ATP. Residue D264 is part of the active site. Residues M344–N478 are cytidylyltransferase.

The protein in the N-terminal section; belongs to the carbohydrate kinase PfkB family. In the C-terminal section; belongs to the cytidylyltransferase family. In terms of assembly, homodimer.

It catalyses the reaction D-glycero-beta-D-manno-heptose 7-phosphate + ATP = D-glycero-beta-D-manno-heptose 1,7-bisphosphate + ADP + H(+). It carries out the reaction D-glycero-beta-D-manno-heptose 1-phosphate + ATP + H(+) = ADP-D-glycero-beta-D-manno-heptose + diphosphate. It functions in the pathway nucleotide-sugar biosynthesis; ADP-L-glycero-beta-D-manno-heptose biosynthesis; ADP-L-glycero-beta-D-manno-heptose from D-glycero-beta-D-manno-heptose 7-phosphate: step 1/4. Its pathway is nucleotide-sugar biosynthesis; ADP-L-glycero-beta-D-manno-heptose biosynthesis; ADP-L-glycero-beta-D-manno-heptose from D-glycero-beta-D-manno-heptose 7-phosphate: step 3/4. Functionally, catalyzes the phosphorylation of D-glycero-D-manno-heptose 7-phosphate at the C-1 position to selectively form D-glycero-beta-D-manno-heptose-1,7-bisphosphate. In terms of biological role, catalyzes the ADP transfer from ATP to D-glycero-beta-D-manno-heptose 1-phosphate, yielding ADP-D-glycero-beta-D-manno-heptose. The polypeptide is Bifunctional protein HldE (Erwinia tasmaniensis (strain DSM 17950 / CFBP 7177 / CIP 109463 / NCPPB 4357 / Et1/99)).